A 343-amino-acid polypeptide reads, in one-letter code: N(4)-bis(aminopropyl)spermidine synthase (343 aa).

This sequence belongs to the branched-chain polyamine synthase family.

It localises to the cytoplasm. It catalyses the reaction 2 S-adenosyl 3-(methylsulfanyl)propylamine + spermidine = N(4)-bis(aminopropyl)spermidine + 2 S-methyl-5'-thioadenosine + 2 H(+). It participates in amine and polyamine biosynthesis. In terms of biological role, involved in the biosynthesis of branched-chain polyamines, which support the growth of thermophiles under high-temperature conditions. Catalyzes the sequential condensation of spermidine with the aminopropyl groups of decarboxylated S-adenosylmethionines to produce N(4)-bis(aminopropyl)spermidine via N(4)-aminopropylspermidine. This is N(4)-bis(aminopropyl)spermidine synthase from Thermus thermophilus.